A 763-amino-acid chain; its full sequence is Ribonucleoside-diphosphate reductase subunit alpha (763 aa).

The 91-residue stretch at 5 to 95 (LFVTKRNGKK…IFHLRKKAYG (91 aa)) folds into the ATP-cone domain. Residues Lys-9, 15-21 (EKINLDK), Thr-55, and Lys-91 contribute to the ATP site. Thr-209 is a binding site for GDP. Cysteines 225 and 462 form a disulfide. DTTP contacts are provided by residues 232 to 234 (DNL), Arg-262, and Arg-269. Asn-437 is a GDP binding site. Catalysis depends on Asn-437, which acts as the Proton acceptor. Cys-439 functions as the Cysteine radical intermediate in the catalytic mechanism. GDP-binding positions include Glu-441 and 623–625 (ETS). Glu-441 functions as the Proton acceptor in the catalytic mechanism.

Belongs to the ribonucleoside diphosphate reductase large chain family. Tetramer of two alpha and two beta subunits.

The catalysed reaction is a 2'-deoxyribonucleoside 5'-diphosphate + [thioredoxin]-disulfide + H2O = a ribonucleoside 5'-diphosphate + [thioredoxin]-dithiol. With respect to regulation, under complex allosteric control mediated by deoxynucleoside triphosphates and ATP binding to separate specificity and activation sites on the alpha subunit. The type of nucleotide bound at the specificity site determines substrate preference. It seems probable that ATP makes the enzyme reduce CDP and UDP, dGTP favors ADP reduction and dTTP favors GDP reduction. Stimulated by ATP and inhibited by dATP binding to the activity site. In terms of biological role, provides the precursors necessary for DNA synthesis. Catalyzes the biosynthesis of deoxyribonucleotides from the corresponding ribonucleotides. The protein is Ribonucleoside-diphosphate reductase subunit alpha (nrdA) of Buchnera aphidicola subsp. Schizaphis graminum (strain Sg).